We begin with the raw amino-acid sequence, 785 residues long: Putative endonuclease MutS2 (785 aa).

Residue 335 to 342 (GPNTGGKT) coordinates ATP. Positions 513-586 (TAEHNEVDTM…AEKVKAAMKE (74 aa)) form a coiled coil. Residues 636-785 (KRDFKPGDEV…GSGVTVVELK (150 aa)) form a partially complements a deletion for mitomycin C (MMC) resistance and for chromosomal DNA transformation region. The segment at 641–681 (PGDEVKVLTFGQKGTLLEKTGGNEWNVQIGILKMKVKEKDL) is KOW region. The 76-residue stretch at 710–785 (LDLRGERYEN…GSGVTVVELK (76 aa)) folds into the Smr domain.

It belongs to the DNA mismatch repair MutS family. MutS2 subfamily. As to quaternary structure, binds to ribosomes as a homodimer. Binds to stalled/collided disomes, association is greater in (ribosome-targeted) antibiotic-treated cells (with increased stalling at specific mRNA sites). The clamp domain of one monomer binds the A-site finger, the 23S rRNA of the central protuberance and ribosomal protein uL5 of the leading (stalled) ribosome, while the other monomer binds in a gap between the ribosomal central protuberance and the L1 stalk of the leading ribosome.

Its subcellular location is the cytoplasm. Functionally, acts as a ribosome collision sensor splitting the ribosome into its 2 subunits. Detects stalled/collided disomes (pairs of ribosomes where the leading ribosome is stalled and a second ribosome has collided with it) which it binds and splits, by an ATP-hydrolysis driven conformational change. Does not seem to have endoribonuclease activity (in the context of ribosome stalling). Acts upstream of the ribosome quality control system (RQC), a ribosome-associated complex that mediates the extraction of incompletely synthesized nascent chains from stalled ribosomes and their subsequent degradation, probably generates substrates for RQC. Its function is as follows. Does not seem to be involved in mismatch repair or in the prevention of interspecific recombination during DNA transformation. Might be involved in homologous recombination. Putative endonuclease that may be involved in the suppression of homologous recombination and may therefore have a key role in the control of bacterial genetic diversity. The sequence is that of Putative endonuclease MutS2 from Bacillus subtilis (strain 168).